The primary structure comprises 448 residues: Cyclic dof factor 3 (448 aa).

Residues 26–108 are disordered; it reads AVTVEDDEED…DGKTLKKPTK (83 aa). Residues 29 to 39 show a composition bias toward acidic residues; sequence VEDDEEDDWSG. Over residues 40–54 the composition is skewed to basic and acidic residues; it reads GDDKSPEKVTPELSD. Residues 55-69 are compositionally biased toward low complexity; the sequence is KNNNNCNDNSFNNSK. Polar residues predominate over residues 80–99; sequence STDQIESSDTPEDNQQTTPD. The Dof-type zinc-finger motif lies at 110–164; it reads LPCPRCKSMETKFCYYNNYNINQPRHFCKACQRYWTAGGTMRNVPVGAGRRKNKS. Zn(2+) is bound by residues C112, C115, C137, and C140. 2 disordered regions span residues 243 to 269 and 332 to 370; these read NGDD…AQSG and SSSP…KQKA. Polar residues-rich tracts occupy residues 246-259 and 332-347; these read DCSS…SNNH and SSSP…NSPT. A compositionally biased stretch (basic and acidic residues) spans 351-368; it reads HPRDEGSSKKDNETERKQ.

As to quaternary structure, interacts with ADO2 (via kelch repeats) and ADO3 (via kelch repeats). Expressed in the vasculature of cotyledons and hypocotyls, leaves and roots.

Its subcellular location is the nucleus. Functionally, transcription factor that binds specifically to a 5'-AA[AG]G-3' consensus core sequence. Regulates a photoperiodic flowering response. Transcriptional repressor of 'CONSTANS' expression. In Arabidopsis thaliana (Mouse-ear cress), this protein is Cyclic dof factor 3 (CDF3).